We begin with the raw amino-acid sequence, 307 residues long: Mitochondrial brown fat uncoupling protein 1 (307 aa).

Residues 1–10 (MVSLTTSEVH) lie on the Mitochondrial intermembrane side of the membrane. The helical transmembrane segment at 11–32 (PTMGVKTFSAGISACLADIITF) threads the bilayer. 3 Solcar repeats span residues 11-102 (PTMG…VQEY), 111-201 (PTLG…MKGA), and 210-295 (DDVP…LKKE). Residues 33-73 (PLDTAKVRLQIQGEGQTSSTIRYKGVLGTITTLAKTEGWPK) lie on the Mitochondrial matrix side of the membrane. Residue K56 participates in fatty acid 16:0 binding. The helical transmembrane segment at 74–96 (LYSGLPAGIQRQISFASLRIGLY) threads the bilayer. Topologically, residues 97-116 (DTVQEYFSSGKETPPTLGNR) are mitochondrial intermembrane. Residues 117-133 (ISAGLMTGGVAVFIGQP) traverse the membrane as a helical segment. The Mitochondrial matrix portion of the chain corresponds to 134–178 (TEVVKVRLQAQSHLHGIKPRYTGTYNAYRIIATTESFSTLWKGTT). The chain crosses the membrane as a helical span at residues 179–195 (PNLMRNVIINRTELVTY). The Mitochondrial intermembrane portion of the chain corresponds to 196–212 (DLMKGALVNNQILADDV). The helical transmembrane segment at 213–232 (PCHLLSALVAGFCTTFLASP) threads the bilayer. Over 233 to 266 (ADVVKTRFINSLPGQYPSVPSCAMTMLTKEGPTA) the chain is Mitochondrial matrix. Position 254 is a cysteine sulfenic acid (-SOH) (C254). A helical transmembrane segment spans residues 267 to 289 (FFKGFVPSFLRLASWNVIMFVCF). K269 serves as a coordination point for fatty acid 16:0. Topologically, residues 290 to 307 (EQLKKELMKSRQTMDCTT) are mitochondrial intermembrane.

The protein belongs to the mitochondrial carrier (TC 2.A.29) family. As to quaternary structure, most probably functions as a monomer. Binds one purine nucleotide per monomer. However, has also been suggested to function as a homodimer or a homotetramer. Tightly associates with cardiolipin in the mitochondrion inner membrane; may stabilize and regulate its activity. Post-translationally, may undergo sulfenylation upon cold exposure. May increase the sensitivity of UCP1 thermogenic function to the activation by noradrenaline probably through structural effects. May undergo ubiquitin-mediated proteasomal degradation.

It is found in the mitochondrion inner membrane. The enzyme catalyses H(+)(in) = H(+)(out). With respect to regulation, has no constitutive proton transporter activity and has to be activated by long-chain fatty acids/LCFAs. Inhibited by purine nucleotides. Both purine nucleotides and LCFAs bind the cytosolic side of the transporter and directly compete to activate or inhibit it. Activated by noradrenaline and reactive oxygen species. Despite lacking canonical translational encoding for selenocysteine, a small pool of the protein has been observed to selectively incorporate selenocysteine at 'Cys-254'. Selenocysteine-modified protein is highly sensitive to redox modification and may constitute a pool of protein highly sensitive to activation by elevated levels of reactive oxygen species (ROS). Its function is as follows. Mitochondrial protein responsible for thermogenic respiration, a specialized capacity of brown adipose tissue and beige fat that participates in non-shivering adaptive thermogenesis to temperature and diet variations and more generally to the regulation of energy balance. Functions as a long-chain fatty acid/LCFA and proton symporter, simultaneously transporting one LCFA and one proton through the inner mitochondrial membrane. However, LCFAs remaining associated with the transporter via their hydrophobic tails, it results in an apparent transport of protons activated by LCFAs. Thereby, dissipates the mitochondrial proton gradient and converts the energy of substrate oxydation into heat instead of ATP. Regulates the production of reactive oxygen species/ROS by mitochondria. The sequence is that of Mitochondrial brown fat uncoupling protein 1 from Dicrostonyx groenlandicus (Northern collared lemming).